Reading from the N-terminus, the 932-residue chain is Myelin gene regulatory factor-like A (932 aa).

Low complexity-rich tracts occupy residues 1–19 and 33–48; these read MDGY…QQHQ and QQQQ…QQQQ. Disordered regions lie at residues 1–63, 152–256, 269–328, 540–568, 582–601, 613–660, and 680–726; these read MDGY…ISNG, VNSP…LSSS, TNTQ…NENP, VTPP…SNNM, TMNI…LSQL, TQNH…NNNN, and NINN…CHWN. Polar residues predominate over residues 49–59; that stretch reads PMNGSNNQLLG. Residues 127–154 adopt a coiled-coil conformation; the sequence is LDSSFLMLQQQLQDQQQQIAQFNSSVNS. Low complexity-rich tracts occupy residues 152–249 and 277–294; these read VNSP…ANNT and PRSI…TNSP. Positions 286-546 form a DNA-binding region, NDT80; the sequence is PNLSPTNSPI…ATQVTPPGDL (261 aa). The span at 311 to 328 shows a compositional bias: polar residues; sequence ENENSDPPSPMTQYNENP. Composition is skewed to low complexity over residues 615–660 and 680–721; these read NHNN…NNNN and NINN…NNNN. The 111-residue stretch at 767–877 folds into the Peptidase S74 domain; sequence SDLRIKYDLK…KQMDEMKLKL (111 aa). The stretch at 863 to 895 forms a coiled coil; that stretch reads TQELSKQMDEMKLKLITYESKLKNLKKKSKNQT. The helical transmembrane segment at 895 to 915 threads the bilayer; sequence TILLIIFMITFLLVALYMYKP.

The protein localises to the membrane. Functionally, transcription factor which acts as a key regulator of pstA (prestalk-A) cells differentiation. Essential for ecmA-specific gene expression. The polypeptide is Myelin gene regulatory factor-like A (mrfA) (Dictyostelium discoideum (Social amoeba)).